The following is a 164-amino-acid chain: UPF0225 protein Shewmr4_2054 (164 aa).

The protein belongs to the UPF0225 family.

The sequence is that of UPF0225 protein Shewmr4_2054 from Shewanella sp. (strain MR-4).